Here is a 140-residue protein sequence, read N- to C-terminus: Putative peptidyl-tRNA hydrolase PTRHD1 (140 aa).

The protein belongs to the PTH2 family. PTRHD1 subfamily.

It catalyses the reaction an N-acyl-L-alpha-aminoacyl-tRNA + H2O = an N-acyl-L-amino acid + a tRNA + H(+). Its function is as follows. As a putative peptidyl-tRNA hydrolase, it might be involved in releasing tRNAs from the ribosome during protein synthesis. Some evidence, however, suggests that it lacks peptidyl-tRNA hydrolase activity. In Homo sapiens (Human), this protein is Putative peptidyl-tRNA hydrolase PTRHD1 (PTRHD1).